The following is a 256-amino-acid chain: Nuclear shuttle protein (256 aa).

Residues 21–42 (NSLIRQQSLFKRNVSKRRPFQT) carry the Bipartite nuclear localization signal motif. Residues 81–96 (DIAKSLPNRTRSYIKL) carry the Nuclear localization signal motif. Residues 150 to 187 (ELFGARIHSHGNLAIVPSLKDRFYIRHVLKRVISVEKD) form an interaction with Arabidopsis thaliana NSI protein region.

Belongs to the begomovirus nuclear shuttle protein family. Binds to single-stranded and double-stranded viral DNA. Interacts with the host nuclear shuttle interacting (NSI) protein. This interaction may allow NSP to recruit NSI monomers to the viral genome and thus regulate nuclear export of viral genome by NSP.

The protein localises to the host nucleus. The protein resides in the host cytoplasm. Its subcellular location is the host cell membrane. Its function is as follows. Binds to the genomic viral ssDNA, shuttles it into and out of the cell nucleus. Begomoviruses use 2 proteins to transport their DNA from cell to cell. The nuclear shuttle protein (NSP) shuttles it between nucleus and cytoplasm and the movement protein (MP) probably transports the DNA-NSP complex to the cell periphery and facilitates movement across the cell wall. This Potato yellow mosaic virus (isolate Venezuela) (PYMV) protein is Nuclear shuttle protein.